A 432-amino-acid chain; its full sequence is Trigger factor (432 aa).

A PPIase FKBP-type domain is found at 161-246 (GSRATIDFVG…LNKVEARELP (86 aa)).

It belongs to the FKBP-type PPIase family. Tig subfamily.

The protein localises to the cytoplasm. It catalyses the reaction [protein]-peptidylproline (omega=180) = [protein]-peptidylproline (omega=0). Its function is as follows. Involved in protein export. Acts as a chaperone by maintaining the newly synthesized protein in an open conformation. Functions as a peptidyl-prolyl cis-trans isomerase. The sequence is that of Trigger factor from Vibrio atlanticus (strain LGP32) (Vibrio splendidus (strain Mel32)).